The chain runs to 369 residues: 3-dehydroquinate synthase (369 aa).

NAD(+)-binding positions include 75-80, 109-113, 133-134, K146, K155, and 173-176; these read DGEEHK, GVIGD, TT, and TLKT. E188, H251, and H268 together coordinate Zn(2+).

It belongs to the sugar phosphate cyclases superfamily. Dehydroquinate synthase family. Co(2+) serves as cofactor. It depends on Zn(2+) as a cofactor. Requires NAD(+) as cofactor.

The protein resides in the cytoplasm. The catalysed reaction is 7-phospho-2-dehydro-3-deoxy-D-arabino-heptonate = 3-dehydroquinate + phosphate. It participates in metabolic intermediate biosynthesis; chorismate biosynthesis; chorismate from D-erythrose 4-phosphate and phosphoenolpyruvate: step 2/7. Its function is as follows. Catalyzes the conversion of 3-deoxy-D-arabino-heptulosonate 7-phosphate (DAHP) to dehydroquinate (DHQ). The chain is 3-dehydroquinate synthase from Legionella pneumophila (strain Paris).